The following is a 439-amino-acid chain: Tol-Pal system protein TolB (439 aa).

Positions 1-22 (MKKPLRWLAALTALLLPLSALA) are cleaved as a signal peptide.

It belongs to the TolB family. As to quaternary structure, the Tol-Pal system is composed of five core proteins: the inner membrane proteins TolA, TolQ and TolR, the periplasmic protein TolB and the outer membrane protein Pal. They form a network linking the inner and outer membranes and the peptidoglycan layer.

It localises to the periplasm. Its function is as follows. Part of the Tol-Pal system, which plays a role in outer membrane invagination during cell division and is important for maintaining outer membrane integrity. In Xanthomonas axonopodis pv. citri (strain 306), this protein is Tol-Pal system protein TolB.